A 526-amino-acid chain; its full sequence is Amine oxidase [flavin-containing] A (526 aa).

Met-1 is subject to N-acetylmethionine. The Cytoplasmic segment spans residues 1–497 (MTDLEKPSIT…HTFLERNLPS (497 aa)). Ser-383 is subject to Phosphoserine. S-8alpha-FAD cysteine is present on Cys-406. The helical; Anchor for type IV membrane protein transmembrane segment at 498 to 518 (VPGLLKITGFSTSVALLCFVL) threads the bilayer. Over 519–526 (YKFKQPQS) the chain is Mitochondrial intermembrane. Residues 520 to 522 (KFK) form an interaction with membrane phospholipid headgroups region.

The protein belongs to the flavin monoamine oxidase family. As to quaternary structure, monomer, homo- or heterodimer (containing two subunits of similar size). Each subunit contains a covalently bound flavin. Enzymatically active as monomer. FAD is required as a cofactor.

Its subcellular location is the mitochondrion outer membrane. It carries out the reaction a secondary aliphatic amine + O2 + H2O = a primary amine + an aldehyde + H2O2. The enzyme catalyses a primary methyl amine + O2 + H2O = an aldehyde + H2O2 + NH4(+). The catalysed reaction is serotonin + O2 + H2O = (5-hydroxyindol-3-yl)acetaldehyde + H2O2 + NH4(+). It catalyses the reaction (R)-adrenaline + O2 + H2O = (R)-3,4-dihydroxymandelaldehyde + methylamine + H2O2. It carries out the reaction dopamine + O2 + H2O = 3,4-dihydroxyphenylacetaldehyde + H2O2 + NH4(+). The enzyme catalyses tyramine + O2 + H2O = (4-hydroxyphenyl)acetaldehyde + H2O2 + NH4(+). The catalysed reaction is (R)-noradrenaline + O2 + H2O = (R)-3,4-dihydroxymandelaldehyde + H2O2 + NH4(+). It catalyses the reaction kynuramine + O2 + H2O = 3-(2-aminophenyl)-3-oxopropanal + H2O2 + NH4(+). It carries out the reaction tryptamine + O2 + H2O = indole-3-acetaldehyde + H2O2 + NH4(+). The enzyme catalyses 2-phenylethylamine + O2 + H2O = 2-phenylacetaldehyde + H2O2 + NH4(+). In terms of biological role, catalyzes the oxidative deamination of biogenic and xenobiotic amines and has important functions in the metabolism of neuroactive and vasoactive amines in the central nervous system and peripheral tissues. Preferentially oxidizes serotonin. Also catalyzes the oxidative deamination of kynuramine to 3-(2-aminophenyl)-3-oxopropanal that can spontaneously condense to 4-hydroxyquinoline. The protein is Amine oxidase [flavin-containing] A of Mus musculus (Mouse).